We begin with the raw amino-acid sequence, 145 residues long: MSKKAIKGYINLIIPAAGATPAPPIGPALGQRKVNIAAFCKDFNDATNGMEKGVPLPTVITVYEDSSFSFKVKTPPASYFLKKYAKITKGSSATKKEAMVGKVTIDDCREIAKLKISDLNTKNIEAATKIICGSAASMGLEVVGN.

Belongs to the universal ribosomal protein uL11 family. As to quaternary structure, part of the ribosomal stalk of the 50S ribosomal subunit. Interacts with L10 and the large rRNA to form the base of the stalk. L10 forms an elongated spine to which L12 dimers bind in a sequential fashion forming a multimeric L10(L12)X complex. In terms of processing, one or more lysine residues are methylated.

Functionally, forms part of the ribosomal stalk which helps the ribosome interact with GTP-bound translation factors. This is Large ribosomal subunit protein uL11 from Rickettsia prowazekii (strain Madrid E).